Consider the following 740-residue polypeptide: Catalase-peroxidase (740 aa).

Positions 107–229 (WHAAGTYRIH…LAAVQMGLIY (123 aa)) form a cross-link, tryptophyl-tyrosyl-methioninium (Trp-Tyr) (with M-255). The Proton acceptor role is filled by H108. Positions 229–255 (YVNPEGPNGNPDPMAAAVDIRETFRRM) form a cross-link, tryptophyl-tyrosyl-methioninium (Tyr-Met) (with W-107). H270 provides a ligand contact to heme b. Residue W321 is the Tryptophan radical intermediate of the active site.

This sequence belongs to the peroxidase family. Peroxidase/catalase subfamily. In terms of assembly, homodimer. The cofactor is heme b. In terms of processing, formation of the three residue Trp-Tyr-Met cross-link is important for the catalase, but not the peroxidase activity of the enzyme.

The enzyme catalyses H2O2 + AH2 = A + 2 H2O. It carries out the reaction 2 H2O2 = O2 + 2 H2O. Bifunctional enzyme with both catalase and broad-spectrum peroxidase activity, oxidizing various electron donors including NADP(H). Protects M.tuberculosis against toxic reactive oxygen species (ROS) including hydrogen peroxide as well as organic peroxides and thus contributes to its survival within host macrophages by countering the phagocyte oxidative burst. Also displays efficient peroxynitritase activity, which may help the bacterium to persist in macrophages. In terms of biological role, catalyzes the oxidative activation of the antitubercular pro-drug isoniazid (INH) to generate an isonicotinoyl radical that then reacts nonenzymatically with NAD to form an isonicotinoyl-NAD adduct which inhibits InhA. The chain is Catalase-peroxidase from Mycobacterium tuberculosis (strain CDC 1551 / Oshkosh).